The primary structure comprises 55 residues: uncharacterized protein (55 aa).

Positions 1-25 are disordered; that stretch reads MKNNDKKKEVQRKYREEIKKKKQKN. A helical transmembrane segment spans residues 35–55; that stretch reads TIIVVTIIVLFIFFTYTLQGF.

It localises to the membrane. This is an uncharacterized protein from Bacillus subtilis (strain 168).